A 305-amino-acid polypeptide reads, in one-letter code: Tyrosine recombinase XerC (305 aa).

A Core-binding (CB) domain is found at 4-95; the sequence is TQIQELIIKW…AIKNFYKFLE (92 aa). Residues 116–298 form the Tyr recombinase domain; sequence LLPKALSEEE…SIKHLETAYV (183 aa). Active-site residues include Arg-159, Lys-182, His-250, Arg-253, and His-276. Tyr-285 (O-(3'-phospho-DNA)-tyrosine intermediate) is an active-site residue.

It belongs to the 'phage' integrase family. XerC subfamily. In terms of assembly, forms a cyclic heterotetrameric complex composed of two molecules of XerC and two molecules of XerD.

It is found in the cytoplasm. Site-specific tyrosine recombinase, which acts by catalyzing the cutting and rejoining of the recombining DNA molecules. The XerC-XerD complex is essential to convert dimers of the bacterial chromosome into monomers to permit their segregation at cell division. It also contributes to the segregational stability of plasmids. In Rickettsia bellii (strain OSU 85-389), this protein is Tyrosine recombinase XerC.